A 671-amino-acid polypeptide reads, in one-letter code: ABC transporter ATP-binding protein/permease wht-1 (671 aa).

Residues Met1–Asn408 are Cytoplasmic-facing. Positions Thr64–Ala310 constitute an ABC transporter domain. An ATP-binding site is contributed by Gly100–Thr107. The chain crosses the membrane as a helical span at residues Leu409–Phe429. The Extracellular segment spans residues Gln430–Asn451. The helical transmembrane segment at Met452–Leu472 threads the bilayer. At Arg473 to Tyr497 the chain is on the cytoplasmic side. The chain crosses the membrane as a helical span at residues Ile498–Phe518. Residues Trp519–Ser525 lie on the Extracellular side of the membrane. The chain crosses the membrane as a helical span at residues Leu526–Phe546. Topologically, residues Ala547–Asp550 are cytoplasmic. Residues Val551–Ile571 traverse the membrane as a helical segment. At Thr572–Asp644 the chain is on the extracellular side. Residues Ile645–Ile665 traverse the membrane as a helical segment. At Arg666–Thr671 the chain is on the cytoplasmic side.

This sequence belongs to the ABC transporter superfamily. ABCG family. Eye pigment precursor importer (TC 3.A.1.204) subfamily. As to expression, expressed in the intestine in both larvae and adults. Expressed in the gut of males.

The protein resides in the membrane. Its function is as follows. Required for efficient RNA interference (RNAi). Plays a role in germline development. This is ABC transporter ATP-binding protein/permease wht-1 from Caenorhabditis elegans.